The chain runs to 570 residues: 4-coumarate--CoA ligase 4 (570 aa).

Ser218, Ser219, Gly220, Thr221, Thr222, and Lys226 together coordinate ATP. Tyr268 is a binding site for (E)-4-coumaroyl-AMP. Arg289 provides a ligand contact to CoA. Residues 291-360 (ELNLVMELIQ…LKFPNAIFGQ (70 aa)) form an SBD1 region. Ala338, Gln360, Gly361, and Thr365 together coordinate (E)-4-coumaroyl-AMP. Positions 360, 361, 365, 448, and 463 each coordinate ATP. The interval 361-427 (GYGMTESGTV…VRGHQLMKGY (67 aa)) is SBD2. Residues Lys465 and Lys469 each contribute to the (E)-4-coumaroyl-AMP site. CoA-binding residues include Lys471 and Gly472. Residue Lys554 coordinates ATP.

It belongs to the ATP-dependent AMP-binding enzyme family. It depends on Mg(2+) as a cofactor.

The catalysed reaction is (E)-sinapate + ATP + CoA = (E)-sinapoyl-CoA + AMP + diphosphate. The enzyme catalyses (E)-4-coumarate + ATP + CoA = (E)-4-coumaroyl-CoA + AMP + diphosphate. It catalyses the reaction (E)-caffeate + ATP + CoA = (E)-caffeoyl-CoA + AMP + diphosphate. It carries out the reaction (E)-ferulate + ATP + CoA = (E)-feruloyl-CoA + AMP + diphosphate. The catalysed reaction is (E)-sinapate + ATP + H(+) = (E)-sinapoyl-AMP + diphosphate. The enzyme catalyses (E)-sinapoyl-AMP + CoA = (E)-sinapoyl-CoA + AMP + H(+). It catalyses the reaction (E)-4-coumarate + ATP + H(+) = (E)-4-coumaroyl-AMP + diphosphate. It carries out the reaction (E)-4-coumaroyl-AMP + CoA = (E)-4-coumaroyl-CoA + AMP + H(+). The catalysed reaction is (E)-caffeate + ATP + H(+) = (E)-caffeoyl-AMP + diphosphate. The enzyme catalyses (E)-caffeoyl-AMP + CoA = (E)-caffeoyl-CoA + AMP + H(+). It catalyses the reaction (E)-ferulate + ATP + H(+) = (E)-feruloyl-AMP + diphosphate. It carries out the reaction (E)-feruloyl-AMP + CoA = (E)-feruloyl-CoA + AMP + H(+). The protein operates within phytoalexin biosynthesis; 3,4',5-trihydroxystilbene biosynthesis; 3,4',5-trihydroxystilbene from trans-4-coumarate: step 1/2. Functionally, produces CoA thioesters of a variety of hydroxy- and methoxy-substituted cinnamic acids, which are used to synthesize several phenylpropanoid-derived compounds, including anthocyanins, flavonoids, isoflavonoids, coumarins, lignin, suberin and wall-bound phenolics. Follows a two-step reaction mechanism, wherein the carboxylate substrate first undergoes adenylation by ATP, followed by a thioesterification in the presence of CoA to yield the final CoA thioesters. The protein is 4-coumarate--CoA ligase 4 of Arabidopsis thaliana (Mouse-ear cress).